Consider the following 425-residue polypeptide: MAKQIQAIRGMNDILPTQSPLWQKVEAVLRSSVSAYGYSEIRTPIVENTDLFKRSIGEVTDIVEKEMYTFEDRNGDSLTLRPEGTASTVRAGNEHGLLYNQEQRLWYMGPMFRHERPQKGRYRQFHQFGVEVYGIGSADIDAEVLMLSARLWEKLGISEHVTLELNTLGDPAERAAYRDALIAFLEQHKDKLDEDSQRRMYSNPLRVLDSKDPQVQGILTDAPALMDYLGEESSQHFAQLRELLDAVGIQYRVNPRLVRGLDYYNRTVFEWVTNSLGSQGTVLAGGRYDGLVAQLGGKDTPAVGFAMGLERIVLLLETLGLTQDIPAAVDVYVTAMGENCLVEAIKVAQELRSALPHLKVMSHCGGGNVKKQMKRADKSGASVALLIGEEELAEGMVTVKHLRNDNEQQQVARNALSAFLAELTK.

Belongs to the class-II aminoacyl-tRNA synthetase family. In terms of assembly, homodimer.

The protein localises to the cytoplasm. It carries out the reaction tRNA(His) + L-histidine + ATP = L-histidyl-tRNA(His) + AMP + diphosphate + H(+). This is Histidine--tRNA ligase from Shewanella sp. (strain W3-18-1).